Reading from the N-terminus, the 180-residue chain is Inosine/xanthosine triphosphatase (180 aa).

8 to 13 (TTNPAK) provides a ligand contact to substrate. The Mg(2+) site is built by D38 and E68. A substrate-binding site is contributed by 68-69 (EA).

Belongs to the YjjX NTPase family. In terms of assembly, homodimer. It depends on Mg(2+) as a cofactor. The cofactor is Mn(2+).

The enzyme catalyses XTP + H2O = XDP + phosphate + H(+). It catalyses the reaction ITP + H2O = IDP + phosphate + H(+). Phosphatase that hydrolyzes non-canonical purine nucleotides such as XTP and ITP to their respective diphosphate derivatives. Probably excludes non-canonical purines from DNA/RNA precursor pool, thus preventing their incorporation into DNA/RNA and avoiding chromosomal lesions. This Yersinia pestis bv. Antiqua (strain Antiqua) protein is Inosine/xanthosine triphosphatase.